The sequence spans 260 residues: Phosphoribosylaminoimidazole-succinocarboxamide synthase (260 aa).

This sequence belongs to the SAICAR synthetase family.

The catalysed reaction is 5-amino-1-(5-phospho-D-ribosyl)imidazole-4-carboxylate + L-aspartate + ATP = (2S)-2-[5-amino-1-(5-phospho-beta-D-ribosyl)imidazole-4-carboxamido]succinate + ADP + phosphate + 2 H(+). It functions in the pathway purine metabolism; IMP biosynthesis via de novo pathway; 5-amino-1-(5-phospho-D-ribosyl)imidazole-4-carboxamide from 5-amino-1-(5-phospho-D-ribosyl)imidazole-4-carboxylate: step 1/2. This is Phosphoribosylaminoimidazole-succinocarboxamide synthase from Pelagibacter ubique (strain HTCC1062).